Reading from the N-terminus, the 433-residue chain is Protein root UVB sensitive 2, chloroplastic (433 aa).

This sequence belongs to the RUS1 family. As to quaternary structure, interacts (via the DUF647 domain) with RUS1 (via the DUF647 domain). In terms of tissue distribution, expressed throughout the plant, with a higher expression near the root apical meristem, in the cortex region of the root elongation zone, in lateral roots and emerging lateral roots. Not detected in extreme root apical meristem or root cap.

The protein localises to the plastid. Involved in a root UV-B sensing pathway and in the protection against the hypersensitivity to very low-fluence-rate (VLF) UV-B. RSU1 and RUS2 are probably both negative modulators of the same UV-B perception pathway, which when overstimulated in the roots causes a block to postgermination development. Required for polar auxin transport and to maintain the normal levels of PIN proteins in the root. This chain is Protein root UVB sensitive 2, chloroplastic, found in Arabidopsis thaliana (Mouse-ear cress).